Consider the following 296-residue polypeptide: Ceramide synthase LOH2 (296 aa).

6 helical membrane passes run 19-39 (VWHF…RLVL), 80-100 (LLYY…EPWA), 121-141 (LYYM…LAWE), 158-178 (IILL…IILA), 206-226 (FALF…FWII), and 254-274 (MLLM…AMIV). Positions 71-278 (VKCKESLWKL…ICAMIVRLLK (208 aa)) constitute a TLC domain. 2 positions are modified to phosphoserine: Ser-289 and Ser-291.

Expressed ubiquitously with highest levels in pollen.

The protein localises to the endoplasmic reticulum membrane. The enzyme catalyses a sphingoid base + hexadecanoyl-CoA = an N-hexadecanoyl-sphingoid base + CoA + H(+). The catalysed reaction is sphinganine + hexadecanoyl-CoA = N-hexadecanoylsphinganine + CoA + H(+). It catalyses the reaction sphing-4-enine + hexadecanoyl-CoA = N-hexadecanoylsphing-4-enine + CoA + H(+). It carries out the reaction sphinga-(4E,8E)-dienine + hexadecanoyl-CoA = N-hexadecanoylsphinga-(4E,8E)-dienine + CoA + H(+). The enzyme catalyses sphinga-(4E,8Z)-dienine + hexadecanoyl-CoA = N-hexadecanoylsphinga-(4E,8Z)-dienine + CoA + H(+). It participates in sphingolipid metabolism. Inhibited by the mycotoxin fumonisin B(1), a sphingosine analog mycotoxins produced by pathogenic fungi. Activated by divalent cation such as magnesium Mg(2+), zinc Zn(2+), manganese Mn(2+) and calcium Ca(2+). Functionally, prevents cell division in root meristems and promotes salicylic acid (SA) production and hypersensitive response (HR). Catalyzes the biosynthesis of ceramide sphingolipids with C(16) fatty acids, structural membrane lipids involved in membrane trafficking (e.g. early endosomes) and cell polarity (e.g. polar auxin transport related proteins); accepts only C16:0 fatty acids, but with a wide range of d18 sphingoid bases, such as sphinganine (d18:0) and palmitoyl-CoA. Mediates resistance to sphinganine-analog mycotoxins (SAMs, e.g. fumonisin B(1)) by restoring the sphingolipid biosynthesis. Could salvage the transport of GPI-anchored proteins from the endoplasmic reticulum to the Golgi apparatus in ceramides-depleted cells after SAM exposure. Contributes to hypoxic conditions tolerance (e.g. submergences), especially in the dark, by promoting the formation of very-long-chain (VLC) ceramide species (22:1, 24:1 and 26:1) and of VLC unsaturated ceramides, which are modulating CTR1-mediated ethylene signaling leading to endoplasmic reticulum (ER)-to-nucleus translocation of EIN2 and EIN3. The sequence is that of Ceramide synthase LOH2 from Arabidopsis thaliana (Mouse-ear cress).